An 876-amino-acid chain; its full sequence is DNA polymerase I (876 aa).

The 5'-3' exonuclease domain maps to 1 to 310 (MKNKLVLIDG…FAIADSVTDE (310 aa)). The segment at 289 to 876 (TDEGEKPLAG…HYGPTWYDAK (588 aa)) is subtilisin large fragment. The polymerase stretch occupies residues 469–876 (EQDRLLTELE…HYGPTWYDAK (408 aa)).

This sequence belongs to the DNA polymerase type-A family. As to quaternary structure, single-chain monomer with multiple functions.

It catalyses the reaction DNA(n) + a 2'-deoxyribonucleoside 5'-triphosphate = DNA(n+1) + diphosphate. In addition to polymerase activity, the recombinant enzyme has strand displacement and 5'-3' exonuclease activity, but lacks proofreading 3'-5' exonuclease activity. This is DNA polymerase I (polA) from Geobacillus stearothermophilus (Bacillus stearothermophilus).